A 145-amino-acid chain; its full sequence is Large-conductance mechanosensitive channel (145 aa).

A run of 2 helical transmembrane segments spans residues 14–34 (VIDLAIGIIIGGAFGKIVDSL) and 81–101 (GIFISTIVDFLIMAFVVFLMV).

It belongs to the MscL family. In terms of assembly, homopentamer.

Its subcellular location is the cell inner membrane. Channel that opens in response to stretch forces in the membrane lipid bilayer. May participate in the regulation of osmotic pressure changes within the cell. This chain is Large-conductance mechanosensitive channel, found in Pelobacter propionicus (strain DSM 2379 / NBRC 103807 / OttBd1).